We begin with the raw amino-acid sequence, 703 residues long: Polyribonucleotide nucleotidyltransferase (703 aa).

Mg(2+) is bound by residues aspartate 486 and aspartate 492. In terms of domain architecture, KH spans 554–613 (PKIITTNIDPEKIRDVIGPGGKMINKIIAETGVKIDIEEDGRVYILTPDSAAAQKALKII). Residues 623 to 691 (GEVYLGKVVR…KQGRINLSRK (69 aa)) form the S1 motif domain.

The protein belongs to the polyribonucleotide nucleotidyltransferase family. Mg(2+) serves as cofactor.

It localises to the cytoplasm. It carries out the reaction RNA(n+1) + phosphate = RNA(n) + a ribonucleoside 5'-diphosphate. Involved in mRNA degradation. Catalyzes the phosphorolysis of single-stranded polyribonucleotides processively in the 3'- to 5'-direction. The polypeptide is Polyribonucleotide nucleotidyltransferase (Ruminiclostridium cellulolyticum (strain ATCC 35319 / DSM 5812 / JCM 6584 / H10) (Clostridium cellulolyticum)).